Here is a 626-residue protein sequence, read N- to C-terminus: Probable potassium transport system protein Kup (626 aa).

13 consecutive transmembrane segments (helical) span residues 8–28 (VALP…IGTS), 44–64 (ISEA…TLSI), 102–122 (IYLI…GIIT), 139–159 (PAFD…LFMV), 171–191 (FGPI…YSII), 196–216 (ILWF…PFVA), 217–237 (FVAM…YADM), 249–269 (WFIV…ALLL), 281–301 (LLVP…AAVI), 339–359 (IYVP…IILF), 377–397 (MLCV…WPWW), 399–419 (VTLF…STSL), and 421–441 (ILSG…ILMT).

The protein belongs to the HAK/KUP transporter (TC 2.A.72) family.

The protein localises to the cell inner membrane. The enzyme catalyses K(+)(in) + H(+)(in) = K(+)(out) + H(+)(out). Its function is as follows. Transport of potassium into the cell. Likely operates as a K(+):H(+) symporter. This is Probable potassium transport system protein Kup from Acinetobacter baylyi (strain ATCC 33305 / BD413 / ADP1).